A 315-amino-acid chain; its full sequence is Putative methyltransferase NSUN5C (315 aa).

S-adenosyl-L-methionine contacts are provided by residues 50–56, aspartate 74, arginine 79, and aspartate 121; that span reads VPPQAIK. Residue cysteine 175 is the Nucleophile of the active site. The tract at residues 245-269 is disordered; that stretch reads TSASQAKASAPERTPSPAPKRKKRA.

Belongs to the class I-like SAM-binding methyltransferase superfamily. RsmB/NOP family. In terms of tissue distribution, ubiquitous.

In terms of biological role, may have S-adenosyl-L-methionine-dependent methyl-transferase activity. The polypeptide is Putative methyltransferase NSUN5C (NSUN5P2) (Homo sapiens (Human)).